A 255-amino-acid polypeptide reads, in one-letter code: DNA polymerase epsilon subunit C (255 aa).

The disordered stretch occupies residues 109–255 (KTSSGLHKLS…DEDEASADDG (147 aa)). A compositionally biased stretch (acidic residues) spans 135–156 (MEEDIPEEDLQEDDEMDVDETE). A compositionally biased stretch (low complexity) spans 171–184 (KASASAKSILSAFK). Acidic residues-rich tracts occupy residues 199–219 (TEED…EIDP) and 236–255 (DLDE…ADDG).

As to quaternary structure, heterotetramer. Consists of four subunits: POL2, DPB2, DPB3 and DPB4.

It localises to the nucleus. Functionally, as accessory component of the DNA polymerase epsilon (DNA polymerase II) participates in chromosomal DNA replication. The polypeptide is DNA polymerase epsilon subunit C (DPB3) (Candida glabrata (strain ATCC 2001 / BCRC 20586 / JCM 3761 / NBRC 0622 / NRRL Y-65 / CBS 138) (Yeast)).